Reading from the N-terminus, the 408-residue chain is Elongation factor Tu, chloroplastic (408 aa).

Residues 10–213 (KPHVNIGTIG…KVDEYIPTPE (204 aa)) form the tr-type G domain. A G1 region spans residues 19-26 (GHVDHGKT). Position 19-26 (19-26 (GHVDHGKT)) interacts with GTP. Thr-26 contacts Mg(2+). Residues 59 to 63 (GITIN) form a G2 region. Residues 80 to 83 (DCPG) form a G3 region. Residues 80–84 (DCPGH) and 135–138 (NKAD) contribute to the GTP site. Positions 135–138 (NKAD) are G4. The interval 173–175 (SAL) is G5.

Belongs to the TRAFAC class translation factor GTPase superfamily. Classic translation factor GTPase family. EF-Tu/EF-1A subfamily.

It is found in the plastid. It localises to the chloroplast. It catalyses the reaction GTP + H2O = GDP + phosphate + H(+). GTP hydrolase that promotes the GTP-dependent binding of aminoacyl-tRNA to the A-site of ribosomes during protein biosynthesis. In Guillardia theta (Cryptophyte), this protein is Elongation factor Tu, chloroplastic (tufA).